We begin with the raw amino-acid sequence, 253 residues long: LexA repressor (253 aa).

The segment at 1–34 (MAIEKKPAGARGSRGSRTVKTLPNGKPDPASLSD) is disordered. Positions 56 to 76 (IREIGDAAGLQSTSSVAYQLK) form a DNA-binding region, H-T-H motif. The span at 82-106 (GFLRRDPNKPRAVDVRHLPETESRS) shows a compositional bias: basic and acidic residues. The interval 82–127 (GFLRRDPNKPRAVDVRHLPETESRSSKAATQAKSKAPQAGAHDPEL) is disordered. Residues 107–120 (SKAATQAKSKAPQA) are compositionally biased toward low complexity. Active-site for autocatalytic cleavage activity residues include serine 177 and lysine 214.

The protein belongs to the peptidase S24 family. As to quaternary structure, homodimer.

The enzyme catalyses Hydrolysis of Ala-|-Gly bond in repressor LexA.. Represses a number of genes involved in the response to DNA damage (SOS response), including recA and lexA. In the presence of single-stranded DNA, RecA interacts with LexA causing an autocatalytic cleavage which disrupts the DNA-binding part of LexA, leading to derepression of the SOS regulon and eventually DNA repair. The sequence is that of LexA repressor from Corynebacterium glutamicum (strain R).